The following is a 964-amino-acid chain: Insulin receptor substrate 1 (964 aa).

Residues 8–109 enclose the PH domain; it reads GMALSGNLKK…WLDKLLVLQR (102 aa). The IRS-type PTB domain maps to 122–236; sequence YDQVWQVVIQ…SAMSAKTESN (115 aa). The segment at 249–268 is disordered; the sequence is LSHEPMRKRSSSANEASKPI. Serine 286, serine 287, and serine 342 each carry phosphoserine. A Phosphotyrosine; by INSR modification is found at tyrosine 410. The YXXM motif 1 signature appears at 410–413; the sequence is YIPM. A disordered region spans residues 527–560; it reads ASNRSQSSIGKEGSSYGSSANRQKKSTSAPLLSL. The span at 528 to 560 shows a compositional bias: polar residues; sequence SNRSQSSIGKEGSSYGSSANRQKKSTSAPLLSL. Serine 554 is subject to Phosphoserine. The short motif at 640–643 is the YXXM motif 2 element; the sequence is YLEM. Positions 698 to 712 are enriched in basic and acidic residues; sequence EKWREQPSRSEEKKS. The segment at 698–735 is disordered; it reads EKWREQPSRSEEKKSNSPLNDNPFSLKPTNVESKSKSH. Over residues 713 to 729 the composition is skewed to polar residues; that stretch reads NSPLNDNPFSLKPTNVE. Tyrosine 907 carries the post-translational modification Phosphotyrosine; by INSR. A disordered region spans residues 921-964; sequence AKYLKRGSRESPPVSACPEDGNTYARIDFDQSDSSSSSSNIFNT. Serine 928 and serine 931 each carry phosphoserine. Residue tyrosine 944 is modified to Phosphotyrosine; by INSR. Residues 952-964 show a composition bias toward low complexity; the sequence is SDSSSSSSNIFNT.

As to quaternary structure, bindings to phosphatidylinositol 3-kinase and SHP2.

In terms of biological role, activates phosphatidylinositol 3-kinase when bound to the regulatory p85 subunit. May mediate the control of various cellular processes by insulin-like peptides. When phosphorylated by the insulin receptor binds specifically to various cellular proteins containing SH2 domains. Involved in control of cell proliferation, cell size, and body and organ growth throughout development. Also has a role in a signaling pathway controlling the physiological response required to endure periods of low nutrient conditions. Insulin/insulin-like growth factor (IGF) signaling pathway has a role in regulating aging and is necessary in the ovary for vitellogenic maturation. The protein is Insulin receptor substrate 1 of Drosophila sechellia (Fruit fly).